A 159-amino-acid polypeptide reads, in one-letter code: 17 kDa surface antigen (159 aa).

Residues 1–19 (MKLLSKIMIIALATSMLQA) form the signal peptide. C20 carries the N-palmitoyl cysteine lipid modification. C20 carries S-diacylglycerol cysteine lipidation.

This sequence belongs to the rickettsiale 17 kDa surface antigen family.

Its subcellular location is the cell outer membrane. The sequence is that of 17 kDa surface antigen (omp) from Rickettsia conorii (strain ATCC VR-613 / Malish 7).